The primary structure comprises 143 residues: Transcriptional regulator MraZ (143 aa).

SpoVT-AbrB domains are found at residues 5 to 47 and 76 to 119; these read EYQH…PMSE and ATEC…SKEI.

The protein belongs to the MraZ family. Forms oligomers.

The protein resides in the cytoplasm. It is found in the nucleoid. The protein is Transcriptional regulator MraZ of Bacillus licheniformis (strain ATCC 14580 / DSM 13 / JCM 2505 / CCUG 7422 / NBRC 12200 / NCIMB 9375 / NCTC 10341 / NRRL NRS-1264 / Gibson 46).